The sequence spans 348 residues: Mannonate dehydratase (348 aa).

This sequence belongs to the mannonate dehydratase family. It depends on Fe(2+) as a cofactor. The cofactor is Mn(2+).

It carries out the reaction D-mannonate = 2-dehydro-3-deoxy-D-gluconate + H2O. The protein operates within carbohydrate metabolism; pentose and glucuronate interconversion. In terms of biological role, catalyzes the dehydration of D-mannonate. This Streptococcus agalactiae serotype V (strain ATCC BAA-611 / 2603 V/R) protein is Mannonate dehydratase.